The chain runs to 1922 residues: Kinesin-related protein 4 (1922 aa).

Positions 22 to 343 (KIKVAIRVRP…LQFAKRAKRV (322 aa)) constitute a Kinesin motor domain. 101–108 (GQTSSGKT) serves as a coordination point for ATP. A disordered region spans residues 448 to 538 (QKIKKIKNSE…DDEFKDNLNL (91 aa)). Over residues 456 to 468 (SENNISSSSSNSS) the composition is skewed to low complexity. 2 stretches are compositionally biased toward acidic residues: residues 469-480 (GEEDDDDKDDEN) and 488-532 (DKDD…DDEF). The stretch at 562-1712 (QVKVKREDLD…ELESTKQKNL (1151 aa)) forms a coiled coil. The tract at residues 1887 to 1922 (TSTDNLTTTSTSLKSKSSSNGENKENQNNNIIIKNN) is disordered.

It belongs to the TRAFAC class myosin-kinesin ATPase superfamily. Kinesin family.

The protein localises to the cytoplasm. The protein resides in the cytoskeleton. In terms of biological role, microtubule-associated force-producing protein that plays a role in organelle transport. Its motor activity is directed toward the microtubule's plus end. Cooperates with dynein in organizing spindle assembly during cell division. This Dictyostelium discoideum (Social amoeba) protein is Kinesin-related protein 4 (kif4).